The sequence spans 590 residues: Aspartate--tRNA ligase (590 aa).

Glu-172 lines the L-aspartate pocket. Residues 196–199 (QLFK) form an aspartate region. Arg-218 contributes to the L-aspartate binding site. Residues 218-220 (RDE) and Gln-227 contribute to the ATP site. His-449 contributes to the L-aspartate binding site. An ATP-binding site is contributed by Glu-483. Position 490 (Arg-490) interacts with L-aspartate. 535 to 538 (GLDR) provides a ligand contact to ATP.

It belongs to the class-II aminoacyl-tRNA synthetase family. Type 1 subfamily. Homodimer.

It is found in the cytoplasm. The enzyme catalyses tRNA(Asp) + L-aspartate + ATP = L-aspartyl-tRNA(Asp) + AMP + diphosphate. Functionally, catalyzes the attachment of L-aspartate to tRNA(Asp) in a two-step reaction: L-aspartate is first activated by ATP to form Asp-AMP and then transferred to the acceptor end of tRNA(Asp). The sequence is that of Aspartate--tRNA ligase from Glaesserella parasuis serovar 5 (strain SH0165) (Haemophilus parasuis).